A 280-amino-acid chain; its full sequence is Phosphonates import ATP-binding protein PhnC (280 aa).

The ABC transporter domain occupies 2 to 245 (FELKNVTRRF…AVKEIYGTDK (244 aa)). 34 to 41 (GRSGAGKS) is an ATP binding site. Residues 257 to 280 (TSLESKRRAEDVSSGRVAKAAAVH) form a disordered region. Residues 260-269 (ESKRRAEDVS) are compositionally biased toward basic and acidic residues.

Belongs to the ABC transporter superfamily. Phosphonates importer (TC 3.A.1.9.1) family. As to quaternary structure, the complex is composed of two ATP-binding proteins (PhnC), two transmembrane proteins (PhnE) and a solute-binding protein (PhnD).

Its subcellular location is the cell inner membrane. It catalyses the reaction phosphonate(out) + ATP + H2O = phosphonate(in) + ADP + phosphate + H(+). In terms of biological role, part of the ABC transporter complex PhnCDE involved in phosphonates import. Responsible for energy coupling to the transport system. This Rhizobium johnstonii (strain DSM 114642 / LMG 32736 / 3841) (Rhizobium leguminosarum bv. viciae) protein is Phosphonates import ATP-binding protein PhnC.